A 294-amino-acid polypeptide reads, in one-letter code: 2-methoxy-6-polyprenyl-1,4-benzoquinol methylase, mitochondrial (294 aa).

A mitochondrion-targeting transit peptide spans 1–10 (MALRSAAGRL). S-adenosyl-L-methionine is bound by residues Thr-100, Asp-136, and 166 to 167 (DA).

It belongs to the class I-like SAM-binding methyltransferase superfamily. MenG/UbiE family. In terms of assembly, component of a multi-subunit COQ enzyme complex.

The protein resides in the mitochondrion inner membrane. It carries out the reaction a 2-methoxy-6-(all-trans-polyprenyl)benzene-1,4-diol + S-adenosyl-L-methionine = a 5-methoxy-2-methyl-3-(all-trans-polyprenyl)benzene-1,4-diol + S-adenosyl-L-homocysteine + H(+). The protein operates within cofactor biosynthesis; ubiquinone biosynthesis. Its function is as follows. Methyltransferase required for the conversion of 2-polyprenyl-6-methoxy-1,4-benzoquinol (DDMQH2) to 2-polyprenyl-3-methyl-6-methoxy-1,4-benzoquinol (DMQH2). This chain is 2-methoxy-6-polyprenyl-1,4-benzoquinol methylase, mitochondrial, found in Oryza sativa subsp. japonica (Rice).